The following is a 393-amino-acid chain: NAD(P)H-quinone oxidoreductase subunit H, chloroplastic (393 aa).

Belongs to the complex I 49 kDa subunit family. NDH is composed of at least 16 different subunits, 5 of which are encoded in the nucleus.

It localises to the plastid. The protein resides in the chloroplast thylakoid membrane. The enzyme catalyses a plastoquinone + NADH + (n+1) H(+)(in) = a plastoquinol + NAD(+) + n H(+)(out). The catalysed reaction is a plastoquinone + NADPH + (n+1) H(+)(in) = a plastoquinol + NADP(+) + n H(+)(out). NDH shuttles electrons from NAD(P)H:plastoquinone, via FMN and iron-sulfur (Fe-S) centers, to quinones in the photosynthetic chain and possibly in a chloroplast respiratory chain. The immediate electron acceptor for the enzyme in this species is believed to be plastoquinone. Couples the redox reaction to proton translocation, and thus conserves the redox energy in a proton gradient. This is NAD(P)H-quinone oxidoreductase subunit H, chloroplastic from Nuphar advena (Common spatterdock).